The chain runs to 147 residues: Effector TSP1 (147 aa).

The N-terminal stretch at 1-19 (MQITKTLVATLFAASTAFA) is a signal peptide. Disulfide bonds link cysteine 44/cysteine 51 and cysteine 67/cysteine 87.

Homodimer.

Its subcellular location is the secreted. Its function is as follows. Stimulates salicylic acid signaling in host plant roots. This is Effector TSP1 from Hypocrea virens (strain Gv29-8 / FGSC 10586) (Gliocladium virens).